The sequence spans 2489 residues: Protein YPR117W (2489 aa).

Helical transmembrane passes span phenylalanine 19 to methionine 39 and valine 128 to threonine 148. 15 N-linked (GlcNAc...) asparagine glycosylation sites follow: asparagine 191, asparagine 210, asparagine 311, asparagine 452, asparagine 468, asparagine 605, asparagine 638, asparagine 663, asparagine 698, asparagine 789, asparagine 835, asparagine 981, asparagine 1255, asparagine 1404, and asparagine 1476. Positions leucine 1610–serine 1676 form a coiled coil. The tract at residues proline 1685–leucine 1704 is disordered. Residues aspartate 1690–leucine 1704 show a composition bias toward low complexity. Residues asparagine 1978 and asparagine 2189 are each glycosylated (N-linked (GlcNAc...) asparagine). Serine 2254 and serine 2278 each carry phosphoserine. Asparagine 2279 carries N-linked (GlcNAc...) asparagine glycosylation. Residues serine 2451–aspartate 2471 show a composition bias toward polar residues. The segment at serine 2451–lysine 2489 is disordered.

Its subcellular location is the cell membrane. It localises to the endoplasmic reticulum membrane. The protein resides in the mitochondrion membrane. In terms of biological role, tube-forming lipid transport protein which may bind to phosphatidylinositols and may affect phosphatidylinositol-4,5-bisphosphate (PtdIns-4,5-P2) distribution. The sequence is that of Protein YPR117W from Saccharomyces cerevisiae (strain ATCC 204508 / S288c) (Baker's yeast).